Here is a 564-residue protein sequence, read N- to C-terminus: Rho guanine nucleotide exchange factor 9 (564 aa).

The SH3 domain maps to 8 to 67; that stretch reads DSIVSAEAVWDHATMANRELAFKAGDVIKVLDASNKDWWWGQIDDEEGWFPASFVRLWVN. Residues 100-110 form an interaction with GPHN region; the sequence is RDQMRANVINE. Positions 103-287 constitute a DH domain; that stretch reads MRANVINEIM…RNVTQQINER (185 aa). The PH domain maps to 318–425; the sequence is ELIYTGEMAW…WLRAFREERK (108 aa). The tract at residues 451-470 is disordered; sequence KVPKQKGVNSARSVPPSYPP. At serine 502 the chain carries Phosphoserine.

As to quaternary structure, interacts with GPHN.

The protein localises to the cytoplasm. It is found in the postsynaptic density. Acts as a guanine nucleotide exchange factor (GEF) for CDC42. Promotes formation of GPHN clusters. The polypeptide is Rho guanine nucleotide exchange factor 9 (ARHGEF9) (Pongo abelii (Sumatran orangutan)).